The chain runs to 215 residues: MMSLILYGYWRSSAAYRVRIALNIKQLVYESRAVHLSREGGEQHHAEFHRLNPSELIPVLIDGELCLNQSLAIIEYLDETYPAPRLIPERGAERYQVKALALDIAADIHPINNLRILQYLTAKLGVADEEKNRWYRHWIDKGFQGLEEKLRHTAGEYCVGNRLSLVDVCLVPQVYNAERFDLDMSRYPTLQQIAARLRALPAFAQAAPENQPDAC.

In terms of domain architecture, GST N-terminal spans 2–85; it reads MSLILYGYWR…YLDETYPAPR (84 aa). Positions 90–215 constitute a GST C-terminal domain; that stretch reads RGAERYQVKA…AAPENQPDAC (126 aa).

It belongs to the GST superfamily. Zeta family.

It carries out the reaction 4-maleylacetoacetate = 4-fumarylacetoacetate. It functions in the pathway amino-acid degradation; L-phenylalanine degradation; acetoacetate and fumarate from L-phenylalanine: step 5/6. This chain is Probable maleylacetoacetate isomerase (maiA), found in Vibrio cholerae serotype O1 (strain ATCC 39315 / El Tor Inaba N16961).